The sequence spans 485 residues: NADH-quinone oxidoreductase subunit N (485 aa).

Helical transmembrane passes span 8–28, 35–55, 75–95, 105–125, 127–147, 159–179, 203–223, 235–255, 271–291, 303–323, 326–346, 371–393, 406–426, and 449–469; these read LIAL…MLCI, FINS…LWFV, FYTG…YAWL, FYLL…ANHL, ALFL…GYAF, YTLL…LVYA, LLAG…LVPF, PVPV…AVVM, LVLA…ALSQ, IAHL…TLAL, VGVY…VVSL, LLSS…LGFI, HLGW…FYYL, and ALTA…LLGL.

Belongs to the complex I subunit 2 family. NDH-1 is composed of 13 different subunits. Subunits NuoA, H, J, K, L, M, N constitute the membrane sector of the complex.

It is found in the cell inner membrane. It carries out the reaction a quinone + NADH + 5 H(+)(in) = a quinol + NAD(+) + 4 H(+)(out). NDH-1 shuttles electrons from NADH, via FMN and iron-sulfur (Fe-S) centers, to quinones in the respiratory chain. The immediate electron acceptor for the enzyme in this species is believed to be ubiquinone. Couples the redox reaction to proton translocation (for every two electrons transferred, four hydrogen ions are translocated across the cytoplasmic membrane), and thus conserves the redox energy in a proton gradient. The polypeptide is NADH-quinone oxidoreductase subunit N (Sodalis glossinidius (strain morsitans)).